The following is a 287-amino-acid chain: Probable F-box protein At5g04010 (287 aa).

Positions 50 to 101 constitute an F-box; degenerate domain; sequence PSPPSWEILCLVGPYMDPESLAVASCVSTTWSKCFSSEDLWKSLPATRHSIF.

The chain is Probable F-box protein At5g04010 (NSFBx) from Arabidopsis thaliana (Mouse-ear cress).